Here is a 137-residue protein sequence, read N- to C-terminus: Large ribosomal subunit protein uL16 (137 aa).

This sequence belongs to the universal ribosomal protein uL16 family. Part of the 50S ribosomal subunit.

Binds 23S rRNA and is also seen to make contacts with the A and possibly P site tRNAs. The chain is Large ribosomal subunit protein uL16 from Cellvibrio japonicus (strain Ueda107) (Pseudomonas fluorescens subsp. cellulosa).